The following is a 101-amino-acid chain: MAKLSLIERENKRAKTVEKYTAKRAELKAIIADQSRSDEERYEARLKLQALPRNASPIRQRNRCSLTGRPRGTFRKFGLARSKIREIAFRGEIPGLTKASW.

The protein belongs to the universal ribosomal protein uS14 family. In terms of assembly, part of the 30S ribosomal subunit. Contacts proteins S3 and S10.

In terms of biological role, binds 16S rRNA, required for the assembly of 30S particles and may also be responsible for determining the conformation of the 16S rRNA at the A site. This is Small ribosomal subunit protein uS14 from Polynucleobacter necessarius subsp. necessarius (strain STIR1).